A 176-amino-acid polypeptide reads, in one-letter code: Calcineurin subunit B type 2 (176 aa).

A lipid anchor (N-myristoyl glycine) is attached at G2. EF-hand domains are found at residues 18 to 53 (DEIK…QQNP), 57 to 85 (RVID…FSVK), 87 to 122 (DEEQ…MVGN), and 128 to 163 (QLQQ…MEIH). Residues D31, D33, S35, S37, E42, D63, D65, N67, E69, E74, D100, D102, D104, and E111 each coordinate Ca(2+). The calcineurin A binding stretch occupies residues 131 to 136 (QLVDKS). Positions 141, 143, 145, 147, and 152 each coordinate Ca(2+).

The protein belongs to the calcineurin regulatory subunit family. In terms of assembly, forms a complex composed of a calmodulin-dependent catalytic subunit (also known as calcineurin A) and a regulatory Ca(2+)-binding subunit (also known as calcineurin B). There are three catalytic subunits, each encoded by a separate gene (PPP3CA, PPP3CB, and PPP3CC) and two regulatory subunits which are also encoded by separate genes (PPP3R1 and PPP3R2). Interacts with SPATA33 (via PQIIIT motif). In terms of tissue distribution, testis specific.

The protein resides in the mitochondrion. Regulatory subunit of calcineurin, a calcium-dependent, calmodulin stimulated protein phosphatase. Confers calcium sensitivity. The sequence is that of Calcineurin subunit B type 2 (Ppp3r2) from Rattus norvegicus (Rat).